The chain runs to 107 residues: uncharacterized protein (107 aa).

Positions 88 to 107 (GSTPWGSGRQVNAARPIGGR) are disordered.

Its subcellular location is the virion. This is an uncharacterized protein from Acanthamoeba polyphaga (Amoeba).